Reading from the N-terminus, the 434-residue chain is Acyl transferase 15 (434 aa).

Catalysis depends on proton acceptor residues His164 and Asp371.

Belongs to the plant acyltransferase family.

Its function is as follows. Involved in the incorporation of ferulate into the cell wall. The polypeptide is Acyl transferase 15 (Oryza sativa subsp. japonica (Rice)).